A 232-amino-acid polypeptide reads, in one-letter code: uncharacterized protein (232 aa).

Transmembrane regions (helical) follow at residues 17 to 37 (FLAK…VFAY), 54 to 74 (MSFM…SGAL), 84 to 104 (ALFL…FMIY), 107 to 127 (GSIV…SVYG), 138 to 158 (GSYL…NMFF), 161 to 181 (SGLN…LTAY), and 203 to 223 (MAVV…LYLL).

This sequence belongs to the BI1 family.

It localises to the cell membrane. This is an uncharacterized protein from Borreliella burgdorferi (strain ATCC 35210 / DSM 4680 / CIP 102532 / B31) (Borrelia burgdorferi).